We begin with the raw amino-acid sequence, 29 residues long: Phospholemman-like protein (29 aa).

The protein belongs to the FXYD family. Phosphorylated by protein kinase C.

It localises to the membrane. Its function is as follows. Induces a hyperpolarization-activated chloride current when expressed in Xenopus oocytes. The sequence is that of Phospholemman-like protein from Scyliorhinus canicula (Small-spotted catshark).